The primary structure comprises 248 residues: Putative TrmH family tRNA/rRNA methyltransferase (248 aa).

The S-adenosyl-L-methionine site is built by Gly-196, Ile-216, and Leu-225.

It belongs to the class IV-like SAM-binding methyltransferase superfamily. RNA methyltransferase TrmH family.

The chain is Putative TrmH family tRNA/rRNA methyltransferase from Staphylococcus aureus (strain COL).